The primary structure comprises 534 residues: Light-independent protochlorophyllide reductase subunit B (534 aa).

Residue D36 participates in [4Fe-4S] cluster binding. The active-site Proton donor is the D274. 409–410 is a substrate binding site; the sequence is GL. Residues 426–446 form a disordered region; that stretch reads DEAGPSHHGGKAVPASAPRAD.

Belongs to the ChlB/BchB/BchZ family. In terms of assembly, protochlorophyllide reductase is composed of three subunits; BchL, BchN and BchB. Forms a heterotetramer of two BchB and two BchN subunits. [4Fe-4S] cluster serves as cofactor.

It carries out the reaction chlorophyllide a + oxidized 2[4Fe-4S]-[ferredoxin] + 2 ADP + 2 phosphate = protochlorophyllide a + reduced 2[4Fe-4S]-[ferredoxin] + 2 ATP + 2 H2O. It functions in the pathway porphyrin-containing compound metabolism; bacteriochlorophyll biosynthesis (light-independent). In terms of biological role, component of the dark-operative protochlorophyllide reductase (DPOR) that uses Mg-ATP and reduced ferredoxin to reduce ring D of protochlorophyllide (Pchlide) to form chlorophyllide a (Chlide). This reaction is light-independent. The NB-protein (BchN-BchB) is the catalytic component of the complex. This Cereibacter sphaeroides (strain ATCC 17029 / ATH 2.4.9) (Rhodobacter sphaeroides) protein is Light-independent protochlorophyllide reductase subunit B.